Here is a 382-residue protein sequence, read N- to C-terminus: Probable inactive dehydrogenase easA (382 aa).

FMN-binding positions include 25 to 27 (PMT), alanine 60, glutamine 102, and histidine 171. Residues histidine 171 and asparagine 174 each coordinate substrate. FMN is bound by residues lysine 223, glycine 299, 324–325 (GR), and arginine 325. A substrate-binding site is contributed by tyrosine 352.

This sequence belongs to the NADH:flavin oxidoreductase/NADH oxidase family.

In terms of biological role, probable inactive dehydrogenase; part of the gene cluster that mediates the biosynthesis of fungal ergot alkaloid. DmaW catalyzes the first step of ergot alkaloid biosynthesis by condensing dimethylallyl diphosphate (DMAP) and tryptophan to form 4-dimethylallyl-L-tryptophan. The second step is catalyzed by the methyltransferase easF that methylates 4-dimethylallyl-L-tryptophan in the presence of S-adenosyl-L-methionine, resulting in the formation of 4-dimethylallyl-L-abrine. The catalase easC and the FAD-dependent oxidoreductase easE then transform 4-dimethylallyl-L-abrine to chanoclavine-I which is further oxidized by easD in the presence of NAD(+), resulting in the formation of chanoclavine-I aldehyde. Agroclavine dehydrogenase easG then mediates the conversion of chanoclavine-I aldehyde to agroclavine via a non-enzymatic adduct reaction: the substrate is an iminium intermediate that is formed spontaneously from chanoclavine-I aldehyde in the presence of glutathione. Further conversion of agroclavine to paspalic acid is a two-step process involving oxidation of agroclavine to elymoclavine and of elymoclavine to paspalic acid, the second step being performed by the elymoclavine oxidase cloA. However, cloA does not encode a functional enzyme indicating that C.fusiformis terminates its ergot alkaloid pathway at elymoclavine. In Claviceps fusiformis (Ergot fungus), this protein is Probable inactive dehydrogenase easA.